Consider the following 1238-residue polypeptide: uncharacterized protein (1238 aa).

Disordered stretches follow at residues 1–38, 122–156, 229–439, 660–1016, 1051–1083, and 1098–1191; these read MSSK…DISS, SSTP…RPSF, PKNN…KNKE, KNKL…TGAA, EEED…KLNS, and KKSG…NASR. Low complexity-rich tracts occupy residues 10–26, 129–149, and 234–276; these read NKNN…NNNN, LSPF…QSPL, and QIDS…TQSQ. A compositionally biased stretch (polar residues) spans 317–343; it reads ELQNQTQINKSKQDLTNISQKINITTS. The segment covering 344–361 has biased composition (basic and acidic residues); the sequence is QHDKDDLGEYRMSEKGGG. Residues 362–372 are compositionally biased toward acidic residues; it reads DDGDDDDDYDN. Positions 383–394 are enriched in basic residues; it reads TNKKQQQQHHHK. A compositionally biased stretch (basic and acidic residues) spans 395–416; it reads GKEESQSEYYEKEKEKEKEDIA. Composition is skewed to low complexity over residues 417–435, 678–691, and 712–792; these read TTRA…NNIN, QQQQ…QQQE, and QPSQ…QEKQ. Over residues 793–805 the composition is skewed to basic and acidic residues; it reads QSQEKHQSQEKHQ. Composition is skewed to low complexity over residues 806–859 and 882–906; these read SQQS…SQQK and SQSQ…QSQR. The span at 916 to 927 shows a compositional bias: acidic residues; sequence ENQDSENLDDTV. The span at 929-944 shows a compositional bias: polar residues; that stretch reads MNYNQIPSTLDHSTLQ. Basic and acidic residues predominate over residues 966–975; sequence EIERRRRELA. The segment covering 976-990 has biased composition (acidic residues); sequence GEDSDEEFEILDEDQ. Composition is skewed to low complexity over residues 1062–1083 and 1108–1121; these read QNNN…KLNS and SSSS…NKKN. Polar residues predominate over residues 1123-1133; that stretch reads PQPTKSVNKPR. Residues 1142–1181 show a composition bias toward low complexity; that stretch reads SQNRQKQSEQQQQQPQQQPQLPQQQQQQQQQQQLRQQQNE. Polar residues predominate over residues 1182 to 1191; sequence NTISSLNASR.

This is an uncharacterized protein from Dictyostelium discoideum (Social amoeba).